Consider the following 372-residue polypeptide: Partitioning defective 6 homolog beta (372 aa).

The residue at position 11 (Ser-11) is a Phosphoserine. In terms of domain architecture, PB1 spans 16–96 (TMEVKSKFGA…PLLRIFIQKK (81 aa)). The interval 126-253 (RKKPHIVISM…ITVRPANQRN (128 aa)) is interaction with PARD3 and CDC42. One can recognise a Pseudo-CRIB domain in the interval 133–150 (ISMPQDFRPVSSIIDVDI). In terms of domain architecture, PDZ spans 157–250 (RVRLYKYGTE…NLIITVRPAN (94 aa)). Positions 253 to 272 (NNVVRNSRTSGSSGQSTDNS) are enriched in polar residues. Positions 253–292 (NNVVRNSRTSGSSGQSTDNSLLGYPQQIEPSFEPEDEDSE) are disordered.

Belongs to the PAR6 family. Interacts with PARD3. Interacts with GTP-bound forms of CDC42 and RAC1. Interacts with GTP-bound RHOQ/TC10. Interacts with PALS1. Interacts with the N-terminal part of PRKCI and PRKCZ. Part of a complex with PARD3, CDC42 or RAC1 and PRKCI or PRKCZ. Part of a complex with LLGL1 and PRKCI. Interacts with PARD3B. Interacts with ECT2. As to expression, expressed in pancreas and in both adult and fetal kidney. Weakly expressed in placenta and lung. Not expressed in other tissues.

It is found in the cytoplasm. It localises to the cell membrane. The protein localises to the cell junction. Its subcellular location is the tight junction. Functionally, adapter protein involved in asymmetrical cell division and cell polarization processes. Probably involved in formation of epithelial tight junctions. Association with PARD3 may prevent the interaction of PARD3 with F11R/JAM1, thereby preventing tight junction assembly. The PARD6-PARD3 complex links GTP-bound Rho small GTPases to atypical protein kinase C proteins. The polypeptide is Partitioning defective 6 homolog beta (PARD6B) (Homo sapiens (Human)).